We begin with the raw amino-acid sequence, 223 residues long: Phosphoribosylformylglycinamidine synthase subunit PurQ (223 aa).

The Glutamine amidotransferase type-1 domain occupies 3–223 (SAVVQLPGLN…FASALDVIAA (221 aa)). C86 acts as the Nucleophile in catalysis. Catalysis depends on residues H196 and E198.

Part of the FGAM synthase complex composed of 1 PurL, 1 PurQ and 2 PurS subunits.

Its subcellular location is the cytoplasm. The catalysed reaction is N(2)-formyl-N(1)-(5-phospho-beta-D-ribosyl)glycinamide + L-glutamine + ATP + H2O = 2-formamido-N(1)-(5-O-phospho-beta-D-ribosyl)acetamidine + L-glutamate + ADP + phosphate + H(+). It carries out the reaction L-glutamine + H2O = L-glutamate + NH4(+). Its pathway is purine metabolism; IMP biosynthesis via de novo pathway; 5-amino-1-(5-phospho-D-ribosyl)imidazole from N(2)-formyl-N(1)-(5-phospho-D-ribosyl)glycinamide: step 1/2. Its function is as follows. Part of the phosphoribosylformylglycinamidine synthase complex involved in the purines biosynthetic pathway. Catalyzes the ATP-dependent conversion of formylglycinamide ribonucleotide (FGAR) and glutamine to yield formylglycinamidine ribonucleotide (FGAM) and glutamate. The FGAM synthase complex is composed of three subunits. PurQ produces an ammonia molecule by converting glutamine to glutamate. PurL transfers the ammonia molecule to FGAR to form FGAM in an ATP-dependent manner. PurS interacts with PurQ and PurL and is thought to assist in the transfer of the ammonia molecule from PurQ to PurL. This is Phosphoribosylformylglycinamidine synthase subunit PurQ from Rhizobium johnstonii (strain DSM 114642 / LMG 32736 / 3841) (Rhizobium leguminosarum bv. viciae).